The following is a 338-amino-acid chain: Fructose-1,6-bisphosphatase class 1 1 (338 aa).

Mg(2+) is bound by residues E88, D107, L109, and D110. Substrate is bound by residues 110–113 (DGSS) and N196. E268 provides a ligand contact to Mg(2+).

It belongs to the FBPase class 1 family. As to quaternary structure, homotetramer. Mg(2+) is required as a cofactor.

It is found in the cytoplasm. The catalysed reaction is beta-D-fructose 1,6-bisphosphate + H2O = beta-D-fructose 6-phosphate + phosphate. It participates in carbohydrate biosynthesis; Calvin cycle. The polypeptide is Fructose-1,6-bisphosphatase class 1 1 (Bradyrhizobium sp. (strain BTAi1 / ATCC BAA-1182)).